The chain runs to 345 residues: Tryptophan--tRNA ligase (345 aa).

Residues Gln-22 to Ser-24 and Gly-30 to Asn-31 contribute to the ATP site. The 'HIGH' region motif lies at Pro-23–Asn-31. Asp-146 is a binding site for L-tryptophan. Residues Gly-158–Asp-160, Val-197, and Lys-206–Ser-210 each bind ATP. Residues Lys-206 to Ser-210 carry the 'KMSKS' region motif.

It belongs to the class-I aminoacyl-tRNA synthetase family. In terms of assembly, homodimer.

It localises to the cytoplasm. The enzyme catalyses tRNA(Trp) + L-tryptophan + ATP = L-tryptophyl-tRNA(Trp) + AMP + diphosphate + H(+). Functionally, catalyzes the attachment of tryptophan to tRNA(Trp). In Photorhabdus laumondii subsp. laumondii (strain DSM 15139 / CIP 105565 / TT01) (Photorhabdus luminescens subsp. laumondii), this protein is Tryptophan--tRNA ligase.